The chain runs to 402 residues: uncharacterized protein (402 aa).

12 helical membrane passes run 23-43 (IVSV…PLAV), 52-72 (LGYG…ATLL), 90-110 (VLYG…SVAI), 121-141 (LLVG…AAIG), 158-178 (WNGI…VLLV), 180-200 (WLGL…GFAL), 228-248 (GMGL…ITLY), 255-275 (ANAV…RLLF), 282-302 (LGGF…LLLL), 309-329 (WVGL…FPAF), 351-371 (LFVD…ANLF), and 375-395 (SMFL…IALH).

The protein belongs to the major facilitator superfamily. YhhS family.

The protein resides in the cell inner membrane. This is an uncharacterized protein from Pseudomonas aeruginosa (strain UCBPP-PA14).